A 207-amino-acid chain; its full sequence is Octanoyltransferase (207 aa).

The BPL/LPL catalytic domain occupies glycine 27–glutamine 202. Substrate contacts are provided by residues arginine 66–histidine 73, serine 133–glycine 135, and glycine 146–serine 148. Residue cysteine 164 is the Acyl-thioester intermediate of the active site.

Belongs to the LipB family.

Its subcellular location is the cytoplasm. The catalysed reaction is octanoyl-[ACP] + L-lysyl-[protein] = N(6)-octanoyl-L-lysyl-[protein] + holo-[ACP] + H(+). The protein operates within protein modification; protein lipoylation via endogenous pathway; protein N(6)-(lipoyl)lysine from octanoyl-[acyl-carrier-protein]: step 1/2. Catalyzes the transfer of endogenously produced octanoic acid from octanoyl-acyl-carrier-protein onto the lipoyl domains of lipoate-dependent enzymes. Lipoyl-ACP can also act as a substrate although octanoyl-ACP is likely to be the physiological substrate. In Laribacter hongkongensis (strain HLHK9), this protein is Octanoyltransferase.